We begin with the raw amino-acid sequence, 147 residues long: Methylglyoxal synthase (147 aa).

In terms of domain architecture, MGS-like spans 4–147 (VSVPATKRIA…LLNFELLCES (144 aa)). Residues His-17, Lys-21, 43–46 (TGTT), and 63–64 (SG) each bind substrate. The active-site Proton donor/acceptor is the Asp-69. His-96 is a substrate binding site.

This sequence belongs to the methylglyoxal synthase family.

It carries out the reaction dihydroxyacetone phosphate = methylglyoxal + phosphate. Its function is as follows. Catalyzes the formation of methylglyoxal from dihydroxyacetone phosphate. In Leptospira borgpetersenii serovar Hardjo-bovis (strain JB197), this protein is Methylglyoxal synthase.